We begin with the raw amino-acid sequence, 260 residues long: Isopentenyl phosphate kinase (260 aa).

Residue 6 to 10 participates in ATP binding; that stretch reads KLGGS. Residue glycine 55 coordinates substrate. Glycine 56 lines the ATP pocket. The substrate site is built by histidine 60 and glycine 159. ATP contacts are provided by aspartate 180, glycine 217, and lysine 221.

Belongs to the isopentenyl phosphate kinase family. As to quaternary structure, homodimer.

It catalyses the reaction isopentenyl phosphate + ATP = isopentenyl diphosphate + ADP. In terms of biological role, catalyzes the formation of isopentenyl diphosphate (IPP), the building block of all isoprenoids. Has no activity with farnesyl phosphate. This is Isopentenyl phosphate kinase from Methanocaldococcus jannaschii (strain ATCC 43067 / DSM 2661 / JAL-1 / JCM 10045 / NBRC 100440) (Methanococcus jannaschii).